A 220-amino-acid chain; its full sequence is Uracil-DNA glycosylase (220 aa).

Catalysis depends on Asp-65, which acts as the Proton acceptor.

The protein belongs to the uracil-DNA glycosylase (UDG) superfamily. UNG family.

The protein localises to the cytoplasm. The enzyme catalyses Hydrolyzes single-stranded DNA or mismatched double-stranded DNA and polynucleotides, releasing free uracil.. Functionally, excises uracil residues from the DNA which can arise as a result of misincorporation of dUMP residues by DNA polymerase or due to deamination of cytosine. The chain is Uracil-DNA glycosylase from Phocaeicola vulgatus (strain ATCC 8482 / DSM 1447 / JCM 5826 / CCUG 4940 / NBRC 14291 / NCTC 11154) (Bacteroides vulgatus).